Here is a 364-residue protein sequence, read N- to C-terminus: DNA replication and repair protein RecF (364 aa).

An ATP-binding site is contributed by 30–37; it reads GDNAQGKT.

The protein belongs to the RecF family.

Its subcellular location is the cytoplasm. Functionally, the RecF protein is involved in DNA metabolism; it is required for DNA replication and normal SOS inducibility. RecF binds preferentially to single-stranded, linear DNA. It also seems to bind ATP. The protein is DNA replication and repair protein RecF of Clostridium kluyveri (strain ATCC 8527 / DSM 555 / NBRC 12016 / NCIMB 10680 / K1).